We begin with the raw amino-acid sequence, 1410 residues long: Slit homolog 1 protein (1410 aa).

The N-terminal stretch at 1–16 (MLICFIFILLIPESAT) is a signal peptide. Positions 17-43 (CPAECVCVDRTVSCVGQQLTEVPQNIP) constitute an LRRNT 1 domain. 20 LRR repeats span residues 22–42 (VCVDRTVSCVGQQLTEVPQNI), 43–66 (PNDTIRLDLQDNEITKIGPNDFSS), 67–90 (LMNLKALQLMDNQIVTIHNQSFSS), 91–114 (LVFLQKLRLSRNRIRHLPDNVFQN), 116–138 (LKLTHLDLSENDITVVSDAQLQG), 140–162 (EFLEVLNLDKNHIFCLENNVISS), 163–186 (WVSLEVLTLNGNRLTTFEEPSNAR), 219–242 (TVCATPLNLQGSSIEILQDKFMTC), 286–309 (PPSTTEIRLEQNQISSIPSHSFKN), 310–333 (LKNLTRLDLSKNIITEIQPKAFLG), 335–357 (HNLHTLVLYGNNITDLKSDTFEG), 358–381 (LGSLQLLLLNANQLTCIRRGTFDH), 383–405 (PKLSMLSLYDNDIKSISEVTFQN), 407–430 (TSLSTLHLAKNPLICDCNLQWLAQ), 442–465 (ARCEQPKRLRKKKFATLPPNKFKC), 489–510 (CDCYGTTVDCNKRGLNTIPTSI), 511–535 (PRFATQLLLSGNNISTVDLNSNIHV), 536–559 (LENLEVLDLSNNHITFINDKSFEK), 561–583 (SKLRELRLNDNKLHHFSSMVLDE), and 585–607 (SNLEILDLSGNNIQCFSSIFFNK). One can recognise an LRRCT 1 domain in the interval 195–243 (NPWNCDCRLRWMRKWLEKAEGQNKTVCATPLNLQGSSIEILQDKFMTCS). Positions 259-286 (ICPLPCTCTGTTVDCRDSGLTYVPTNLP) constitute an LRRNT 2 domain. Residues 417–466 (NPLICDCNLQWLAQINLQKNIETSGARCEQPKRLRKKKFATLPPNKFKCK) enclose the LRRCT 2 domain. An LRRNT 3 domain is found at 484 to 511 (ICPTQCDCYGTTVDCNKRGLNTIPTSIP). The 53-residue stretch at 619 to 671 (NDLLCDCRILPLMSWLRSNSSHSIDIPPCQQFQYSDNESDKQRCAAFPEETCS) folds into the LRRCT 3 domain. Positions 677–703 (CPPKCSCLDRVVRCSNKNLTSFPSRIP) constitute an LRRNT 4 domain. 6 LRR repeats span residues 681–703 (CSCLDRVVRCSNKNLTSFPSRIP), 704–726 (FDTTELYLDANYINEIPAHDLNR), 727–750 (LYSLTKLDLSHNRLISLENNTFSN), 752–774 (TRLSTLIISYNKLRCLQPLAFNG), 775–798 (LNALRILSLHGNDISFLPQSAFSN), and 800–823 (TSITHIAVGSNSLYCDCNMAWFSK). The region spanning 810–859 (NSLYCDCNMAWFSKWIKSKFIEAGIARCEYPNTVSNQLLLTAQPYQFTCD) is the LRRCT 4 domain. 2 EGF-like domains span residues 871–906 (DLCLNSPCKNNAICETTSSRKYTCNCTPGFYGVHCE) and 908–945 (QIDACYGSPCLNNATCKVAQAGRFNCYCNKGFEGDYCE). Disulfide bonds link C873–C884, C878–C894, C896–C905, C912–C923, C917–C933, C935–C944, C951–C962, C956–C971, C973–C982, C989–C1002, C996–C1011, C1013–C1022, C1029–C1040, C1034–C1049, C1051–C1060, C1076–C1086, C1081–C1097, and C1099–C1108. The EGF-like 1; calcium-binding domain maps to 947 to 983 (NIDDCVNSKCENGGKCVDLINSYRCDCPMEYEGKHCE). The 39-residue stretch at 985 to 1023 (KLEYCTKKLNPCENNGKCIPINGSYSCMCSPGFTGNNCE) folds into the EGF-like 3 domain. The EGF-like 2; calcium-binding domain maps to 1025-1061 (NIDDCKNVECQNGGSCVDGILSYDCLCRPGYAGQYCE). Positions 1072–1109 (KTDACQQSACGQGECVASQNSSDFTCKCHEGFSGPSCD) constitute an EGF-like 4 domain. In terms of domain architecture, Laminin G-like spans 1112–1285 (MSVGFKNPGA…LENVNTEQSC (174 aa)). One copy of the LRR 27 repeat lies at 1197–1221 (TSERKCFLQIDKNPVQIVENSGKSD). 8 cysteine pairs are disulfide-bonded: C1259/C1285, C1292/C1302, C1297/C1314, C1316/C1325, C1332/C1368, C1346/C1382, C1357/C1398, and C1361/C1400. The EGF-like 5 domain maps to 1288–1326 (TVNFCAGIDCGNGKCTNNALSPKGYMCQCDSHFSGEHCD). The CTCK domain maps to 1332-1406 (CDKQKFRRHH…QCQCEPTKSV (75 aa)).

In terms of assembly, interacts with eva-1.

It is found in the secreted. Its function is as follows. Functions as a ligand for sax-3 receptor during larval development. Acts via the sax-3/Robo receptor to direct ventral axon guidance and guidance at the midline during embryonic development. The sequence is that of Slit homolog 1 protein (slt-1) from Caenorhabditis elegans.